We begin with the raw amino-acid sequence, 153 residues long: Histone H2A.Z-specific chaperone CHZ1 (153 aa).

Over residues 1 to 29 (MSDEAKEKRELESQKESSHNKSEKSVEPK) the composition is skewed to basic and acidic residues. Residues 1–153 (MSDEAKEKRE…EDEEDDDFKE (153 aa)) form a disordered region. S2 bears the N-acetylserine mark. Residues 56–65 (LTKSENNGTV) are compositionally biased toward polar residues. S68 and S70 each carry phosphoserine. Acidic residues predominate over residues 84–94 (EGEEEEDDLAE). Residues 87 to 108 (EEEDDLAEIDTSNIITSGRRTR) are important for H2A.Z-H2B binding. Positions 110 to 138 (KVIDYKKTAEELDKKEPSTGSKDDVGYGE) are enriched in basic and acidic residues. Residues 139–153 (KEEDDEDEEDDDFKE) are compositionally biased toward acidic residues.

The protein belongs to the CHZ1 family. As to quaternary structure, forms a heterotrimer with H2A.Z-H2B, stabilizing the association of the histone dimer. Also, with a lower affinity, forms a heterotrimer with H2A-H2B.

It localises to the nucleus. In terms of biological role, forms a chaperone-bound H2A.Z-H2B complex that acts as a source for SWR1 complex-dependent H2A to H2A.Z histone replacement in chromatin. This Saccharomyces cerevisiae (strain ATCC 204508 / S288c) (Baker's yeast) protein is Histone H2A.Z-specific chaperone CHZ1 (CHZ1).